An 872-amino-acid polypeptide reads, in one-letter code: Alanine--tRNA ligase (872 aa).

The Zn(2+) site is built by His-567, His-571, Cys-669, and His-673.

Belongs to the class-II aminoacyl-tRNA synthetase family. It depends on Zn(2+) as a cofactor.

It is found in the cytoplasm. It catalyses the reaction tRNA(Ala) + L-alanine + ATP = L-alanyl-tRNA(Ala) + AMP + diphosphate. Catalyzes the attachment of alanine to tRNA(Ala) in a two-step reaction: alanine is first activated by ATP to form Ala-AMP and then transferred to the acceptor end of tRNA(Ala). Also edits incorrectly charged Ser-tRNA(Ala) and Gly-tRNA(Ala) via its editing domain. The sequence is that of Alanine--tRNA ligase from Streptococcus agalactiae serotype Ia (strain ATCC 27591 / A909 / CDC SS700).